We begin with the raw amino-acid sequence, 263 residues long: tRNA pseudouridine synthase A (263 aa).

The active-site Nucleophile is D57. Position 115 (Y115) interacts with substrate.

Belongs to the tRNA pseudouridine synthase TruA family. Homodimer.

The enzyme catalyses uridine(38/39/40) in tRNA = pseudouridine(38/39/40) in tRNA. Its function is as follows. Formation of pseudouridine at positions 38, 39 and 40 in the anticodon stem and loop of transfer RNAs. In Buchnera aphidicola subsp. Schizaphis graminum (strain Sg), this protein is tRNA pseudouridine synthase A.